A 127-amino-acid chain; its full sequence is Large ribosomal subunit protein bL19 (127 aa).

The protein belongs to the bacterial ribosomal protein bL19 family.

Functionally, this protein is located at the 30S-50S ribosomal subunit interface and may play a role in the structure and function of the aminoacyl-tRNA binding site. This Ruegeria pomeroyi (strain ATCC 700808 / DSM 15171 / DSS-3) (Silicibacter pomeroyi) protein is Large ribosomal subunit protein bL19.